The primary structure comprises 525 residues: GMP synthase [glutamine-hydrolyzing] (525 aa).

Positions 9–207 constitute a Glutamine amidotransferase type-1 domain; it reads RILILDFGSQ…VSDICGCEKQ (199 aa). Catalysis depends on C86, which acts as the Nucleophile. Active-site residues include H181 and E183. One can recognise a GMPS ATP-PPase domain in the interval 208–400; sequence WTPAKIIDDA…LGLPYNMLYR (193 aa). 235–241 is an ATP binding site; sequence SGGVDSS.

In terms of assembly, homodimer.

It catalyses the reaction XMP + L-glutamine + ATP + H2O = GMP + L-glutamate + AMP + diphosphate + 2 H(+). The protein operates within purine metabolism; GMP biosynthesis; GMP from XMP (L-Gln route): step 1/1. Catalyzes the synthesis of GMP from XMP. This Idiomarina loihiensis (strain ATCC BAA-735 / DSM 15497 / L2-TR) protein is GMP synthase [glutamine-hydrolyzing].